Consider the following 170-residue polypeptide: MTTTVPFVTCDLLDDHTDKDIQVLTPSLDGRFFKSYGARKIFSGQIVTVKCFEDNSRVKELLATDGTGKVLVVDGGASMRCALMGDMIAESAVKYHWDGVVIYGCIRDVDALAELDLGIHALAAIPQKSNRQGIGEVGVNLYFGGVTFQAGCYIYADNNGIIVSKQKLID.

Residues 85-88 and R107 contribute to the substrate site; that span reads GDMI. A divalent metal cation is bound at residue D108.

The protein belongs to the class II aldolase/RraA-like family. As to quaternary structure, homotrimer. Requires a divalent metal cation as cofactor.

The enzyme catalyses 4-hydroxy-4-methyl-2-oxoglutarate = 2 pyruvate. The catalysed reaction is oxaloacetate + H(+) = pyruvate + CO2. Catalyzes the aldol cleavage of 4-hydroxy-4-methyl-2-oxoglutarate (HMG) into 2 molecules of pyruvate. Also contains a secondary oxaloacetate (OAA) decarboxylase activity due to the common pyruvate enolate transition state formed following C-C bond cleavage in the retro-aldol and decarboxylation reactions. The sequence is that of Putative 4-hydroxy-4-methyl-2-oxoglutarate aldolase from Acinetobacter baylyi (strain ATCC 33305 / BD413 / ADP1).